The chain runs to 415 residues: Secernin-2 (415 aa).

Cys-8 is an active-site residue.

This sequence belongs to the peptidase C69 family. Secernin subfamily.

In Danio rerio (Zebrafish), this protein is Secernin-2 (scrn2).